We begin with the raw amino-acid sequence, 1060 residues long: FACT complex subunit SPT16 (1060 aa).

Residues 458 to 490 form a disordered region; the sequence is FNDDNETQKENNNNNNKRPGLSQTSNTTALKLE. Residues 478-490 show a composition bias toward polar residues; it reads LSQTSNTTALKLE. The stretch at 508–532 forms a coiled coil; sequence NADDANSEKLRQEIQIKLHEKRLQE. A disordered region spans residues 977–1060; the sequence is QGESDEEEES…AKADRNSGFD (84 aa). Composition is skewed to acidic residues over residues 979–990 and 997–1044; these read ESDEEEESDEES and EDPQ…EDWD. A compositionally biased stretch (basic and acidic residues) spans 1045 to 1060; sequence ALERKAAKADRNSGFD.

This sequence belongs to the peptidase M24 family. SPT16 subfamily. Forms a stable heterodimer with POB3. The SPT16-POB3 dimer weakly associates with multiple molecules of NHP6 to form the FACT complex.

The protein localises to the nucleus. It localises to the chromosome. In terms of biological role, component of the FACT complex, a general chromatin factor that acts to reorganize nucleosomes. The FACT complex is involved in multiple processes that require DNA as a template such as mRNA elongation, DNA replication and DNA repair. During transcription elongation the FACT complex acts as a histone chaperone that both destabilizes and restores nucleosomal structure. It facilitates the passage of RNA polymerase II and transcription by promoting the dissociation of one histone H2A-H2B dimer from the nucleosome, then subsequently promotes the reestablishment of the nucleosome following the passage of RNA polymerase II. This is FACT complex subunit SPT16 (CDC68) from Candida albicans (strain SC5314 / ATCC MYA-2876) (Yeast).